Reading from the N-terminus, the 311-residue chain is Probable cell division protein WhiA (311 aa).

The segment at residues 277-311 (TLKEVADQIPDGPISKSGVNHRFKKLHEIAESLRE) is a DNA-binding region (H-T-H motif).

It belongs to the WhiA family.

Involved in cell division and chromosome segregation. This is Probable cell division protein WhiA from Lactobacillus acidophilus (strain ATCC 700396 / NCK56 / N2 / NCFM).